We begin with the raw amino-acid sequence, 201 residues long: Homeobox protein ceh-28 (201 aa).

A compositionally biased stretch (polar residues) spans 72-84 (SYYSSPSQNQRSY). Residues 72–94 (SYYSSPSQNQRSYQNHRQHSNPD) form a disordered region. Positions 104-163 (KRKPRVLFTQHQVNELEERFKKQRYVTATEREELAQCLGLTATQVKIWFQNRRYKCKRLA) form a DNA-binding region, homeobox.

The protein belongs to the NK-2 homeobox family.

The protein resides in the nucleus. Its function is as follows. Probable transcription factor that regulates neuronal differention, including synapse assembly of the cholinergic motor neuron M4. Activates expression of growth factor, neuropeptide and transcription factor genes, such as TGF-beta dbl-1, FMRFamide-like flp-5 and transcription repressor zag-1, in the M4 neuron. Required for pharynx peristalsis. In Caenorhabditis elegans, this protein is Homeobox protein ceh-28.